The chain runs to 239 residues: Small ribosomal subunit protein uS3 (239 aa).

The KH type-2 domain maps to I39 to K109. The tract at residues G219–Q239 is disordered.

It belongs to the universal ribosomal protein uS3 family. Part of the 30S ribosomal subunit. Forms a tight complex with proteins S10 and S14.

Binds the lower part of the 30S subunit head. Binds mRNA in the 70S ribosome, positioning it for translation. This Treponema denticola (strain ATCC 35405 / DSM 14222 / CIP 103919 / JCM 8153 / KCTC 15104) protein is Small ribosomal subunit protein uS3.